The sequence spans 360 residues: Peptide chain release factor 1 (360 aa).

Q235 carries the post-translational modification N5-methylglutamine.

It belongs to the prokaryotic/mitochondrial release factor family. Post-translationally, methylated by PrmC. Methylation increases the termination efficiency of RF1.

The protein resides in the cytoplasm. Functionally, peptide chain release factor 1 directs the termination of translation in response to the peptide chain termination codons UAG and UAA. This is Peptide chain release factor 1 from Burkholderia cenocepacia (strain ATCC BAA-245 / DSM 16553 / LMG 16656 / NCTC 13227 / J2315 / CF5610) (Burkholderia cepacia (strain J2315)).